The sequence spans 126 residues: Protein ApaG (126 aa).

Positions 2–126 constitute an ApaG domain; the sequence is TSLEDSIKVE…FRLAVPGMLH (125 aa).

This Shewanella sediminis (strain HAW-EB3) protein is Protein ApaG.